We begin with the raw amino-acid sequence, 779 residues long: MSLPRCTLLWARLPAGRGAGPRAAPCSALRALVGSFPGASGRVPCLAASSSASGGSKAPNTSLFVPLTVKPQGPSADGDVGAELTRPLDKNEVKKILDKFYKRQEIQKLSADYGLDARLFHQAFISFRNYIMQSHSLDVDIHIVLNDICFSAAHVDDLFPFFLRHAKQIFPVLECKDDLRKISDLRIPPNWYPEARARQRKIIFHSGPTNSGKTYHAIQRYLSATSGVYCGPLKLLAHEIFEKSNAAGVPCDLVTGEERLTVEPEGKQATHVSCTVEMCNVATPYEVAVIDEIQMIRDPARGWAWTRALLGLCAEEVHLCGESAAINLVSELLYTTGEEVEVQKYERLTPISVLDHALESLDNLQPGDCIVCFSKNDIYSVSRQIEIRGLESAVIYGSLPPGTKLAQARKFNDPNDPCKILVATDAIGMGLNLSIRRIIFYSLIKPSINEKGEKELEPITTSQALQIAGRAGRFSSHFKEGQVTTMHRDDLALLKDILNRPVDPIQAAGLHPTAEQIEMFAYHLPETTLSNLIDIFVDFAQVDGQYFVCNMDDFKFSAELIQHIPLSLRVRYVFCTAPINKKQPFVCSSLLQFARQYSRNEPLTFAWLRRYIKWPLLPPKNIKDLMDLEAVHDVFDLYLWLSYRFIDMFPDSSLVRSLQKELDAIIQEGVHNITKLIKISESRKLLNLESLPSGDQSRLSGASKSPARRTRGTKSAGNKATEPLSPSDKELPLASRLVQQGLLTADMLRQLQKEWLTQQPEHSREKVGTRRKKKDPDSD.

A mitochondrion-targeting transit peptide spans 1–40; it reads MSLPRCTLLWARLPAGRGAGPRAAPCSALRALVGSFPGAS. The residue at position 99 (Lys-99) is an N6-acetyllysine. Residues 194-334 form the Helicase ATP-binding domain; the sequence is EARARQRKII…AINLVSELLY (141 aa). Residue 207-214 coordinates ATP; the sequence is GPTNSGKT. A Helicase C-terminal domain is found at 353–521; it reads VLDHALESLD…PTAEQIEMFA (169 aa). Residues 650 to 779 are interaction with LAMTOR5, important for protein stability; it reads PDSSLVRSLQ…RRKKKDPDSD (130 aa). Polar residues predominate over residues 693–703; sequence SGDQSRLSGAS. Disordered regions lie at residues 693 to 732 and 754 to 779; these read SGDQSRLSGASKSPARRTRGTKSAGNKATEPLSPSDKELP and EWLTQQPEHSREKVGTRRKKKDPDSD. Position 725 is a phosphoserine (Ser-725). The segment covering 761-779 has biased composition (basic and acidic residues); that stretch reads EHSREKVGTRRKKKDPDSD.

This sequence belongs to the helicase family. As to quaternary structure, homodimer; in free form. Component of the mitochondrial degradosome (mtEXO) complex which is a heteropentamer containing 2 copies of SUPV3L1 and 3 copies of PNPT1. As part of mitochondrial degradosome complex, interacts with GRSF1 in a RNA-dependent manner; the interaction enhances the activity of the complex. Interacts with LAMTOR5/HBXIP, WRN and BLM. Requires Mg(2+) as cofactor. It depends on Mn(2+) as a cofactor.

The protein resides in the nucleus. The protein localises to the mitochondrion matrix. It localises to the mitochondrion nucleoid. It carries out the reaction ATP + H2O = ADP + phosphate + H(+). With respect to regulation, helicase activity toward DNA substrate is inhibited by micromolar concentrations of 5,6-dichloro-1-(beta-D-ribofuranosyl)benzotriazole (DRBT) and 4,5,6,7-tetrabromobenzotriazole (TBBT). Helicase activity toward RNA substrate is inhibited by elevated concentrations of TBBT. Inhibited by some ring-expanded nucleoside analogs. Major helicase player in mitochondrial RNA metabolism. Component of the mitochondrial degradosome (mtEXO) complex, that degrades 3' overhang double-stranded RNA with a 3'-to-5' directionality in an ATP-dependent manner. Involved in the degradation of non-coding mitochondrial transcripts (MT-ncRNA) and tRNA-like molecules. ATPase and ATP-dependent multisubstrate helicase, able to unwind double-stranded (ds) DNA and RNA, and RNA/DNA heteroduplexes in the 5'-to-3' direction. Plays a role in the RNA surveillance system in mitochondria; regulates the stability of mature mRNAs, the removal of aberrantly formed mRNAs and the rapid degradation of non coding processing intermediates. Also implicated in recombination and chromatin maintenance pathways. May protect cells from apoptosis. Associates with mitochondrial DNA. The protein is ATP-dependent RNA helicase SUPV3L1, mitochondrial (Supv3l1) of Mus musculus (Mouse).